A 172-amino-acid polypeptide reads, in one-letter code: Translation initiation factor IF-3 (172 aa).

This sequence belongs to the IF-3 family. In terms of assembly, monomer.

The protein localises to the cytoplasm. Its function is as follows. IF-3 binds to the 30S ribosomal subunit and shifts the equilibrium between 70S ribosomes and their 50S and 30S subunits in favor of the free subunits, thus enhancing the availability of 30S subunits on which protein synthesis initiation begins. In Campylobacter jejuni subsp. jejuni serotype O:6 (strain 81116 / NCTC 11828), this protein is Translation initiation factor IF-3.